The sequence spans 256 residues: Ribosomal RNA small subunit methyltransferase A (256 aa).

The S-adenosyl-L-methionine site is built by Asn12, Leu14, Gly39, Glu60, Asp85, and Asn103.

It belongs to the class I-like SAM-binding methyltransferase superfamily. rRNA adenine N(6)-methyltransferase family. RsmA subfamily.

The protein localises to the cytoplasm. It catalyses the reaction adenosine(1518)/adenosine(1519) in 16S rRNA + 4 S-adenosyl-L-methionine = N(6)-dimethyladenosine(1518)/N(6)-dimethyladenosine(1519) in 16S rRNA + 4 S-adenosyl-L-homocysteine + 4 H(+). Specifically dimethylates two adjacent adenosines (A1518 and A1519) in the loop of a conserved hairpin near the 3'-end of 16S rRNA in the 30S particle. May play a critical role in biogenesis of 30S subunits. In Legionella pneumophila (strain Corby), this protein is Ribosomal RNA small subunit methyltransferase A.